Reading from the N-terminus, the 420-residue chain is Isocitrate dehydrogenase [NADP] (420 aa).

Residues Thr-75 to Thr-77 and Arg-82 contribute to the NADP(+) site. Thr-77 provides a ligand contact to substrate. Residues Ser-94 to Arg-100, Arg-109, and Arg-132 contribute to the substrate site. Asp-252 provides a ligand contact to Mn(2+). NADP(+) is bound at residue Lys-260. Position 275 (Asp-275) interacts with Mn(2+). NADP(+) is bound by residues Gly-310–His-315 and Asn-328.

This sequence belongs to the isocitrate and isopropylmalate dehydrogenases family. It depends on Mg(2+) as a cofactor. Requires Mn(2+) as cofactor.

The catalysed reaction is D-threo-isocitrate + NADP(+) = 2-oxoglutarate + CO2 + NADPH. Its function is as follows. May function in the production of NADPH for fatty acid and sterol synthesis. The protein is Isocitrate dehydrogenase [NADP] (IDP3) of Saccharomyces cerevisiae (strain ATCC 204508 / S288c) (Baker's yeast).